Consider the following 155-residue polypeptide: Small ribosomal subunit protein uS7 (155 aa).

The protein belongs to the universal ribosomal protein uS7 family. In terms of assembly, part of the 30S ribosomal subunit. Contacts proteins S9 and S11.

In terms of biological role, one of the primary rRNA binding proteins, it binds directly to 16S rRNA where it nucleates assembly of the head domain of the 30S subunit. Is located at the subunit interface close to the decoding center, probably blocks exit of the E-site tRNA. In Prosthecochloris aestuarii (strain DSM 271 / SK 413), this protein is Small ribosomal subunit protein uS7.